The primary structure comprises 328 residues: Malate dehydrogenase (328 aa).

Residue 12–18 (GAAGQIG) participates in NAD(+) binding. Residues Arg95 and Arg101 each contribute to the substrate site. NAD(+) is bound by residues Asn108, Gln115, and 132-134 (VGN). Positions 134 and 165 each coordinate substrate. His190 acts as the Proton acceptor in catalysis.

The protein belongs to the LDH/MDH superfamily. MDH type 2 family.

The enzyme catalyses (S)-malate + NAD(+) = oxaloacetate + NADH + H(+). Its function is as follows. Catalyzes the reversible oxidation of malate to oxaloacetate. In Leptothrix cholodnii (strain ATCC 51168 / LMG 8142 / SP-6) (Leptothrix discophora (strain SP-6)), this protein is Malate dehydrogenase.